The chain runs to 502 residues: ATP-dependent DNA helicase uvsW (502 aa).

Positions 122–280 (VFEGLVNRRR…QYVGMFGEIF (159 aa)) constitute a Helicase ATP-binding domain. 135 to 142 (LPTSAGKS) lines the ATP pocket. The DEAH box signature appears at 232-235 (DECH). A Helicase C-terminal domain is found at 335–501 (WIAKLAIKLA…KFNYVMKTVN (167 aa)).

Probably interacts with UvsW.1. Interacts with gp32. Mg(2+) serves as cofactor.

The catalysed reaction is Couples ATP hydrolysis with the unwinding of duplex DNA by translocating in the 3'-5' direction.. It catalyses the reaction ATP + H2O = ADP + phosphate + H(+). Unwinding activity is strongly stimulated by single-stranded binding protein gp32, the ssDNA annealing activity is partially inhibited by gp32 and strongly inhibited by ATP-gamma-S. Another study did not find gp32 stimulation of helicase activity. Holliday junction (HJ) branch migration is inhibited by ATP-gamma-S. Plays important roles in recombination-dependent DNA repair and the reorganization of stalled replication forks during viral DNA synthesis. Active on in vivo-derived T4 DNA; viral DNA is highly modified by hydroxymethylation and glucosylation of cytosine residues. Helps process Holliday junction (HJ) intermediates to mature products by catalyzing branch migration. Probably able to catalyze replication fork regression. Unwinds HJ and Y-branched but not linear double-stranded (ds)DNA; unwinding requires ATP and Mg(2+). Unwinds dsDNA with a 3'-single-stranded (ss)DNA overhang, suggesting it is a 3'-5' helicase. Another study does not find this activity. Unwinds D- and R-loops. Also anneals ssDNA; ATP stimulates annealing. Has ssDNA and dsDNA-stimulated ATPase activity, also hydrolyzes GTP in the presence of DNA. The sequence is that of ATP-dependent DNA helicase uvsW from Enterobacteria phage T4 (Bacteriophage T4).